We begin with the raw amino-acid sequence, 328 residues long: Ketol-acid reductoisomerase (NADP(+)) (328 aa).

Residues 2 to 182 (AKIYRDVDAS…GATRAGVIET (181 aa)) form the KARI N-terminal Rossmann domain. Residues 25 to 28 (YGIQ), arginine 48, serine 53, and 83 to 86 (DMEQ) contribute to the NADP(+) site. Residue histidine 108 is part of the active site. Glycine 134 provides a ligand contact to NADP(+). The 146-residue stretch at 183–328 (TFAEETETDL…IEMRRLLFGQ (146 aa)) folds into the KARI C-terminal knotted domain. Aspartate 191, glutamate 195, glutamate 227, and glutamate 231 together coordinate Mg(2+). Residue serine 252 participates in substrate binding.

It belongs to the ketol-acid reductoisomerase family. Mg(2+) is required as a cofactor.

The catalysed reaction is (2R)-2,3-dihydroxy-3-methylbutanoate + NADP(+) = (2S)-2-acetolactate + NADPH + H(+). The enzyme catalyses (2R,3R)-2,3-dihydroxy-3-methylpentanoate + NADP(+) = (S)-2-ethyl-2-hydroxy-3-oxobutanoate + NADPH + H(+). The protein operates within amino-acid biosynthesis; L-isoleucine biosynthesis; L-isoleucine from 2-oxobutanoate: step 2/4. It participates in amino-acid biosynthesis; L-valine biosynthesis; L-valine from pyruvate: step 2/4. Functionally, involved in the biosynthesis of branched-chain amino acids (BCAA). Catalyzes an alkyl-migration followed by a ketol-acid reduction of (S)-2-acetolactate (S2AL) to yield (R)-2,3-dihydroxy-isovalerate. In the isomerase reaction, S2AL is rearranged via a Mg-dependent methyl migration to produce 3-hydroxy-3-methyl-2-ketobutyrate (HMKB). In the reductase reaction, this 2-ketoacid undergoes a metal-dependent reduction by NADPH to yield (R)-2,3-dihydroxy-isovalerate. The sequence is that of Ketol-acid reductoisomerase (NADP(+)) from Pyrobaculum arsenaticum (strain DSM 13514 / JCM 11321 / PZ6).